The following is a 292-amino-acid chain: Ribosomal protein L11 methyltransferase (292 aa).

4 residues coordinate S-adenosyl-L-methionine: threonine 144, glycine 165, aspartate 187, and asparagine 229.

The protein belongs to the methyltransferase superfamily. PrmA family.

The protein localises to the cytoplasm. The enzyme catalyses L-lysyl-[protein] + 3 S-adenosyl-L-methionine = N(6),N(6),N(6)-trimethyl-L-lysyl-[protein] + 3 S-adenosyl-L-homocysteine + 3 H(+). Functionally, methylates ribosomal protein L11. This Azotobacter vinelandii (strain DJ / ATCC BAA-1303) protein is Ribosomal protein L11 methyltransferase.